A 260-amino-acid chain; its full sequence is NH(3)-dependent NAD(+) synthetase (260 aa).

ATP is bound at residue 31-38; sequence GLSGGLDS. D37 serves as a coordination point for Mg(2+). Deamido-NAD(+) is bound at residue R112. T132 provides a ligand contact to ATP. A Mg(2+)-binding site is contributed by E137. The ATP site is built by K161 and S183.

The protein belongs to the NAD synthetase family. As to quaternary structure, homodimer.

The enzyme catalyses deamido-NAD(+) + NH4(+) + ATP = AMP + diphosphate + NAD(+) + H(+). It functions in the pathway cofactor biosynthesis; NAD(+) biosynthesis; NAD(+) from deamido-NAD(+) (ammonia route): step 1/1. Its function is as follows. Catalyzes the ATP-dependent amidation of deamido-NAD to form NAD. Uses ammonia as a nitrogen source. This is NH(3)-dependent NAD(+) synthetase from Helicobacter pylori (strain P12).